The sequence spans 439 residues: tRNA modification GTPase MnmE (439 aa).

3 residues coordinate (6S)-5-formyl-5,6,7,8-tetrahydrofolate: arginine 23, glutamate 80, and lysine 120. A TrmE-type G domain is found at 217–365 (GLKIVIAGEP…LLTALQSHLP (149 aa)). Asparagine 227 contributes to the K(+) binding site. Residues 227–232 (NAGKSS), 246–252 (TEVAGTT), and 271–274 (DTAG) contribute to the GTP site. Mg(2+) is bound at residue serine 231. 3 residues coordinate K(+): threonine 246, valine 248, and threonine 251. Threonine 252 lines the Mg(2+) pocket. A (6S)-5-formyl-5,6,7,8-tetrahydrofolate-binding site is contributed by lysine 439.

The protein belongs to the TRAFAC class TrmE-Era-EngA-EngB-Septin-like GTPase superfamily. TrmE GTPase family. In terms of assembly, homodimer. Heterotetramer of two MnmE and two MnmG subunits. K(+) serves as cofactor.

It is found in the cytoplasm. Functionally, exhibits a very high intrinsic GTPase hydrolysis rate. Involved in the addition of a carboxymethylaminomethyl (cmnm) group at the wobble position (U34) of certain tRNAs, forming tRNA-cmnm(5)s(2)U34. The polypeptide is tRNA modification GTPase MnmE (Rhizobium meliloti (strain 1021) (Ensifer meliloti)).